Here is a 474-residue protein sequence, read N- to C-terminus: Zinc finger protein 230 (474 aa).

Positions 8 to 76 (VTFKDVAVFF…ETATQREGNS (69 aa)) constitute a KRAB domain. Positions 80–167 (TIAEAGPHED…PQQFHSGEKS (88 aa)) are KRNB. 9 C2H2-type zinc fingers span residues 168–190 (HTCNECGKSFCYISALRIHQRVH), 196–218 (SKCDMRGKEFSQSSCLQTRERVH), 224–246 (FKCEQCGKGFRCRAILQVHCKLH), 252–274 (YICEKCGRAFIHDFQLQKHQIIH), 280–302 (FKCEICGKSFCLRSSLNRHCMVH), 308–330 (YKSEECGKGFTDSLDLHKHQIIH), 336–358 (YNCKECGKSFRWSSYLLIHQRIH), 364–386 (YRCEECGKGYISKSGLNLHQRVH), and 392–414 (YNCKECGKSFSRASSILNHKKLH). The C2H2-type 10; atypical zinc finger occupies 420-442 (FKCEDCGKRLVHRSFCKDQQGDH).

Belongs to the krueppel C2H2-type zinc-finger protein family.

The protein localises to the nucleus. May be involved in transcriptional regulation. In Homo sapiens (Human), this protein is Zinc finger protein 230 (ZNF230).